The primary structure comprises 423 residues: LysM domain-containing GPI-anchored protein 3 (423 aa).

A signal peptide spans 1–24 (MKNPEKPLLLFLILASSLASMATA). Cystine bridges form between cysteine 31-cysteine 97, cysteine 37-cysteine 160, cysteine 95-cysteine 158, and cysteine 97-cysteine 160. Residues 107-154 (THYKTRTSDTLGSIADSVYGGLVSPEQIQVANSETDLSVLDVGTKLVI) form the LysM 1 domain. N-linked (GlcNAc...) asparagine glycosylation is present at asparagine 162. Residues 173-216 (LSYVVRGIDTMAGIAKRFSTSVTDLTNVNAMGAPDINPGDILAV) form the LysM 2 domain. 2 disulfides stabilise this stretch: cysteine 221–cysteine 253 and cysteine 248–cysteine 276. N-linked (GlcNAc...) asparagine glycosylation is present at asparagine 238. Asparagine 285 carries N-linked (GlcNAc...) asparagine glycosylation. Glycine 394 is lipidated: GPI-anchor amidated glycine. Residues 395–423 (GSISIASCPLSYYSFIALLIPIGSCFFVF) constitute a propeptide, removed in mature form.

As to quaternary structure, interacts with peptidoglycans.

The protein resides in the cell membrane. Functionally, required as a cell surface receptor for peptidoglycan (PGN) elicitor signaling leading to innate immunity. Plays an essential role in detecting PGNs and restricting bacterial growth (of Pseudomonas syringae pv. tomato DC3000 for example). This Arabidopsis thaliana (Mouse-ear cress) protein is LysM domain-containing GPI-anchored protein 3 (LYM3).